Here is a 490-residue protein sequence, read N- to C-terminus: Bifunctional protein HldE (490 aa).

Positions 1–330 are ribokinase; sequence MFDFDDLSQA…RKILPHAYRA (330 aa). Position 205–208 (205–208) interacts with ATP; that stretch reads NRKE. D275 is an active-site residue. A cytidylyltransferase region spans residues 358–490; the sequence is FTNGCFDILH…LVDRARSDQR (133 aa).

In the N-terminal section; belongs to the carbohydrate kinase PfkB family. This sequence in the C-terminal section; belongs to the cytidylyltransferase family. In terms of assembly, homodimer.

It catalyses the reaction D-glycero-beta-D-manno-heptose 7-phosphate + ATP = D-glycero-beta-D-manno-heptose 1,7-bisphosphate + ADP + H(+). The catalysed reaction is D-glycero-beta-D-manno-heptose 1-phosphate + ATP + H(+) = ADP-D-glycero-beta-D-manno-heptose + diphosphate. The protein operates within nucleotide-sugar biosynthesis; ADP-L-glycero-beta-D-manno-heptose biosynthesis; ADP-L-glycero-beta-D-manno-heptose from D-glycero-beta-D-manno-heptose 7-phosphate: step 1/4. It participates in nucleotide-sugar biosynthesis; ADP-L-glycero-beta-D-manno-heptose biosynthesis; ADP-L-glycero-beta-D-manno-heptose from D-glycero-beta-D-manno-heptose 7-phosphate: step 3/4. Its function is as follows. Catalyzes the phosphorylation of D-glycero-D-manno-heptose 7-phosphate at the C-1 position to selectively form D-glycero-beta-D-manno-heptose-1,7-bisphosphate. Catalyzes the ADP transfer from ATP to D-glycero-beta-D-manno-heptose 1-phosphate, yielding ADP-D-glycero-beta-D-manno-heptose. The chain is Bifunctional protein HldE from Bradyrhizobium sp. (strain ORS 278).